Reading from the N-terminus, the 344-residue chain is MSNAITMGIFWHLIGAASAACFYAPFKKVKKWSWETMWSVGGIVSWIILPWAISALLLPNFWAYYSSFSLSTLLPVFLFGAMWGIGNINYGLTMRYLGMSMGIGIAIGITLIVGTLMTPIINGNFDVLISTEGGRMTLLGVLVALIGVGIVTRAGQLKERKMGIKAEEFNLKKGLVLAVMCGIFSAGMSFAMNAAKPMYEAAAALGVDPLYVALPSYVVIMGGGAIINLGFCFIRLAKVKDLSLKVDFSLEKPLIIHNVLLSALGGLMWYLQFFFYAWGHARIPAQYDYISWMLHMSFYVLCGGIVGLVLKEWNNAGRRPVTVLSLGCVVIIVAANIVGIGMAN.

Helical transmembrane passes span 4–24, 38–58, 68–88, 101–121, 137–157, 175–195, 214–234, 259–279, 290–310, and 323–343; these read AITM…CFYA, WSVG…ALLL, FSLS…IGNI, MGIG…TPII, TLLG…AGQL, LVLA…MNAA, LPSY…FCFI, VLLS…YAWG, ISWM…GLVL, and VLSL…IGMA.

The protein belongs to the L-rhamnose transporter (TC 2.A.7.6) family.

The protein resides in the cell inner membrane. It catalyses the reaction L-rhamnopyranose(in) + H(+)(in) = L-rhamnopyranose(out) + H(+)(out). Uptake of L-rhamnose across the cytoplasmic membrane with the concomitant transport of protons into the cell (symport system). The polypeptide is L-rhamnose-proton symporter (Shigella dysenteriae serotype 1 (strain Sd197)).